We begin with the raw amino-acid sequence, 482 residues long: tRNA modification GTPase MnmE (482 aa).

3 residues coordinate (6S)-5-formyl-5,6,7,8-tetrahydrofolate: arginine 25, glutamate 82, and lysine 135. The TrmE-type G domain maps to 231 to 404 (GIKVVIAGQP…LRRVLLDIAG (174 aa)). A K(+)-binding site is contributed by asparagine 241. GTP contacts are provided by residues 241 to 246 (NAGKSS), 260 to 266 (TPIAGTT), 285 to 288 (DTAG), and 385 to 387 (SAR). Serine 245 serves as a coordination point for Mg(2+). Positions 260, 262, and 265 each coordinate K(+). Threonine 266 contributes to the Mg(2+) binding site. Residue lysine 482 coordinates (6S)-5-formyl-5,6,7,8-tetrahydrofolate.

It belongs to the TRAFAC class TrmE-Era-EngA-EngB-Septin-like GTPase superfamily. TrmE GTPase family. Homodimer. Heterotetramer of two MnmE and two MnmG subunits. The cofactor is K(+).

Its subcellular location is the cytoplasm. Functionally, exhibits a very high intrinsic GTPase hydrolysis rate. Involved in the addition of a carboxymethylaminomethyl (cmnm) group at the wobble position (U34) of certain tRNAs, forming tRNA-cmnm(5)s(2)U34. The chain is tRNA modification GTPase MnmE from Paracidovorax citrulli (strain AAC00-1) (Acidovorax citrulli).